Reading from the N-terminus, the 331-residue chain is Tetraacyldisaccharide 4'-kinase (331 aa).

55–62 contacts ATP; sequence TAGGNGKT.

This sequence belongs to the LpxK family.

It carries out the reaction a lipid A disaccharide + ATP = a lipid IVA + ADP + H(+). Its pathway is glycolipid biosynthesis; lipid IV(A) biosynthesis; lipid IV(A) from (3R)-3-hydroxytetradecanoyl-[acyl-carrier-protein] and UDP-N-acetyl-alpha-D-glucosamine: step 6/6. Its function is as follows. Transfers the gamma-phosphate of ATP to the 4'-position of a tetraacyldisaccharide 1-phosphate intermediate (termed DS-1-P) to form tetraacyldisaccharide 1,4'-bis-phosphate (lipid IVA). The chain is Tetraacyldisaccharide 4'-kinase from Edwardsiella ictaluri (strain 93-146).